Reading from the N-terminus, the 209-residue chain is Methylthioribulose-1-phosphate dehydratase (209 aa).

The Zn(2+) site is built by histidine 99 and histidine 101.

Belongs to the aldolase class II family. MtnB subfamily. Requires Zn(2+) as cofactor.

The catalysed reaction is 5-(methylsulfanyl)-D-ribulose 1-phosphate = 5-methylsulfanyl-2,3-dioxopentyl phosphate + H2O. It functions in the pathway amino-acid biosynthesis; L-methionine biosynthesis via salvage pathway; L-methionine from S-methyl-5-thio-alpha-D-ribose 1-phosphate: step 2/6. Catalyzes the dehydration of methylthioribulose-1-phosphate (MTRu-1-P) into 2,3-diketo-5-methylthiopentyl-1-phosphate (DK-MTP-1-P). The polypeptide is Methylthioribulose-1-phosphate dehydratase (Leptospira biflexa serovar Patoc (strain Patoc 1 / Ames)).